Here is a 448-residue protein sequence, read N- to C-terminus: Phosphoglucosamine mutase (448 aa).

Catalysis depends on S100, which acts as the Phosphoserine intermediate. The Mg(2+) site is built by S100, D240, D242, and D244. Residue S100 is modified to Phosphoserine.

The protein belongs to the phosphohexose mutase family. Requires Mg(2+) as cofactor. In terms of processing, activated by phosphorylation.

The enzyme catalyses alpha-D-glucosamine 1-phosphate = D-glucosamine 6-phosphate. Functionally, catalyzes the conversion of glucosamine-6-phosphate to glucosamine-1-phosphate. This Bacillus cereus (strain ATCC 10987 / NRS 248) protein is Phosphoglucosamine mutase.